Here is a 96-residue protein sequence, read N- to C-terminus: Putative defensin-like protein 263 (96 aa).

The signal sequence occupies residues 1–26 (MEKTSLKLVFLFSLTVIALCLSLSAA). 4 cysteine pairs are disulfide-bonded: cysteine 48-cysteine 96, cysteine 67-cysteine 86, cysteine 73-cysteine 91, and cysteine 77-cysteine 93.

Belongs to the DEFL family.

The protein resides in the secreted. The sequence is that of Putative defensin-like protein 263 from Arabidopsis thaliana (Mouse-ear cress).